The chain runs to 410 residues: F-box protein At5g36730 (410 aa).

Residues 1-46 (MAMSNLPRDLLEEVLSRVPVKSIAAVRSTCKNWNSLTYGQSFTKKL) enclose the F-box domain.

In Arabidopsis thaliana (Mouse-ear cress), this protein is F-box protein At5g36730.